A 317-amino-acid polypeptide reads, in one-letter code: Beta-ketoacyl-[acyl-carrier-protein] synthase III (317 aa).

Residues Cys112 and His244 contribute to the active site. Positions 245–249 (QANLR) are ACP-binding. Asn274 is a catalytic residue.

It belongs to the thiolase-like superfamily. FabH family. As to quaternary structure, homodimer.

It is found in the cytoplasm. The catalysed reaction is malonyl-[ACP] + acetyl-CoA + H(+) = 3-oxobutanoyl-[ACP] + CO2 + CoA. It participates in lipid metabolism; fatty acid biosynthesis. Functionally, catalyzes the condensation reaction of fatty acid synthesis by the addition to an acyl acceptor of two carbons from malonyl-ACP. Catalyzes the first condensation reaction which initiates fatty acid synthesis and may therefore play a role in governing the total rate of fatty acid production. Possesses both acetoacetyl-ACP synthase and acetyl transacylase activities. Its substrate specificity determines the biosynthesis of branched-chain and/or straight-chain of fatty acids. This Shigella sonnei (strain Ss046) protein is Beta-ketoacyl-[acyl-carrier-protein] synthase III.